A 141-amino-acid chain; its full sequence is Large ribosomal subunit protein uL16 (141 aa).

It belongs to the universal ribosomal protein uL16 family. Part of the 50S ribosomal subunit.

Binds 23S rRNA and is also seen to make contacts with the A and possibly P site tRNAs. The polypeptide is Large ribosomal subunit protein uL16 (Rhodospirillum centenum (strain ATCC 51521 / SW)).